We begin with the raw amino-acid sequence, 343 residues long: 4-hydroxy-2-oxovalerate aldolase (343 aa).

In terms of domain architecture, Pyruvate carboxyltransferase spans 5–256 (ILLCDPTLRD…ETGIDLYKIL (252 aa)). Residue 13–14 (RD) participates in substrate binding. A Mn(2+)-binding site is contributed by aspartate 14. Histidine 17 acts as the Proton acceptor in catalysis. The substrate site is built by serine 168 and histidine 195. Mn(2+) is bound by residues histidine 195 and histidine 197.

This sequence belongs to the 4-hydroxy-2-oxovalerate aldolase family. In terms of assembly, interacts with MhpF.

It carries out the reaction (S)-4-hydroxy-2-oxopentanoate = acetaldehyde + pyruvate. The protein operates within aromatic compound metabolism; 3-phenylpropanoate degradation. In terms of biological role, catalyzes the retro-aldol cleavage of 4-hydroxy-2-oxopentanoate to pyruvate and acetaldehyde. Is involved in the meta-cleavage pathway for the degradation of aromatic compounds. The chain is 4-hydroxy-2-oxovalerate aldolase from Pectobacterium atrosepticum (strain SCRI 1043 / ATCC BAA-672) (Erwinia carotovora subsp. atroseptica).